The following is a 353-amino-acid chain: MNILFDSNETIYPFPPKPRPLSVDAKQHYRSRIKTLLRERNAVMVAHYYTDPEIQALAEETGGCVADSLEMARFGSTHSASTLLVAGVRFMGETAKILNPEKTILMPTLEAECSLDLGCPIDAFSRFCDAHPDRTVVVYANTSAAVKARADWVVTSSIAVELIEHLDSLGEKIIWAPDRHLGSYVQKQTGADVLCWQGACIVHDEFKTQALQRMKILYPDAAILVHPESPQSVVEMADAVGSTSQLIQAAKTLPQRELIVATDRGIFYKMQQACPEKTLLEAPTAGEGATCRSCAHCPWMAMNGLEAIANGLEQGGHAHEIHVDAALREGALIPLNRMLDFAASLKLRVKGNA.

Iminosuccinate is bound by residues histidine 47 and serine 68. Cysteine 113 lines the [4Fe-4S] cluster pocket. Residues tyrosine 139–asparagine 141 and serine 156 each bind iminosuccinate. Residue cysteine 200 coordinates [4Fe-4S] cluster. Residues histidine 226–glutamate 228 and threonine 243 each bind iminosuccinate. Cysteine 297 is a [4Fe-4S] cluster binding site.

It belongs to the quinolinate synthase family. Type 1 subfamily. The cofactor is [4Fe-4S] cluster.

It is found in the cytoplasm. It carries out the reaction iminosuccinate + dihydroxyacetone phosphate = quinolinate + phosphate + 2 H2O + H(+). It functions in the pathway cofactor biosynthesis; NAD(+) biosynthesis; quinolinate from iminoaspartate: step 1/1. Catalyzes the condensation of iminoaspartate with dihydroxyacetone phosphate to form quinolinate. In Pectobacterium atrosepticum (strain SCRI 1043 / ATCC BAA-672) (Erwinia carotovora subsp. atroseptica), this protein is Quinolinate synthase.